Reading from the N-terminus, the 215-residue chain is Somatotropin (215 aa).

The signal sequence occupies residues 1 to 25; sequence MAPGARISLLLLITFTLLGPQRSGA. Histidine 44 contributes to the Zn(2+) binding site. Cysteine 77 and cysteine 188 form a disulfide bridge. The residue at position 130 (serine 130) is a Phosphoserine. Glutamate 197 provides a ligand contact to Zn(2+). A disulfide bond links cysteine 205 and cysteine 213.

It belongs to the somatotropin/prolactin family.

It localises to the secreted. Plays an important role in growth control. Its major role in stimulating body growth is to stimulate the liver and other tissues to secrete IGF1. It stimulates both the differentiation and proliferation of myoblasts. It also stimulates amino acid uptake and protein synthesis in muscle and other tissues. This is Somatotropin (GH1) from Trichosurus vulpecula (Brush-tailed possum).